The following is a 1262-amino-acid chain: Isoleucine--tRNA ligase, cytoplasmic (1262 aa).

At Met1 the chain carries N-acetylmethionine. Residues Pro48–His58 carry the 'HIGH' region motif. The 'KMSKS' region motif lies at Lys600–Arg604. Lys603 lines the ATP pocket. A phosphoserine mark is found at Ser1047 and Ser1049. A Phosphothreonine modification is found at Thr1058.

The protein belongs to the class-I aminoacyl-tRNA synthetase family. As to quaternary structure, part of a multisubunit complex that groups tRNA ligases for Arg (RARS1), Asp (DARS1), Gln (QARS1), Ile (IARS1), Leu (LARS1), Lys (KARS1), Met (MARS1) the bifunctional ligase for Glu and Pro (EPRS1) and the auxiliary subunits AIMP1/p43, AIMP2/p38 and EEF1E1/p18. As to expression, expressed in liver and muscle (at protein level).

The protein resides in the cytoplasm. Its subcellular location is the cytosol. It catalyses the reaction tRNA(Ile) + L-isoleucine + ATP = L-isoleucyl-tRNA(Ile) + AMP + diphosphate. Functionally, catalyzes the specific attachment of an amino acid to its cognate tRNA in a 2 step reaction: the amino acid (AA) is first activated by ATP to form AA-AMP and then transferred to the acceptor end of the tRNA. The sequence is that of Isoleucine--tRNA ligase, cytoplasmic from Homo sapiens (Human).